The sequence spans 447 residues: uncharacterized protein (447 aa).

In terms of domain architecture, FAD-binding PCMH-type spans Val-29 to Ala-201.

It belongs to the oxygen-dependent FAD-linked oxidoreductase family. Requires FAD as cofactor.

It is found in the spore coat. This is an uncharacterized protein from Bacillus subtilis (strain 168).